A 224-amino-acid polypeptide reads, in one-letter code: MSIRSWPAAERPRERLLELGAASLSDAELLAIFLRTGVAGKSAVDLARHLLNQFDGLRPLLDADLSAFTSQLGLGPAKFAQLQAVMEMARRHMAESLRRESALENPTQVRSYLKALLRHEPHEVFGCLFLDNKHRVMTFEILFRGTINASYVHPRQVVKRAMAHNAASLILCHNHPSGITTPSRSDIDLTKRLKEALLLVDVHVLDHVIVGDGEPLSMVERGLM.

In terms of domain architecture, MPN spans 102–224 (ALENPTQVRS…PLSMVERGLM (123 aa)). Residues histidine 173, histidine 175, and aspartate 186 each coordinate Zn(2+). Residues 173–186 (HNHPSGITTPSRSD) carry the JAMM motif motif.

The protein belongs to the UPF0758 family.

This chain is UPF0758 protein Psyr_0222, found in Pseudomonas syringae pv. syringae (strain B728a).